The sequence spans 410 residues: Serine/threonine transporter SstT (410 aa).

The next 9 membrane-spanning stretches (helical) occupy residues 11 to 31 (VSLVKRIIIGIIIGITLAVTV), 45 to 65 (FVGALKAVAPVLVFFLVISAI), 79 to 99 (ILILYGFSTFLASLTAVVASF), 138 to 158 (ALLNANYIGILTWAVLLGIAL), 179 to 199 (IVTWVINFAPIGIMGLVFDAI), 214 to 234 (LAVLLGTMCFVAFVMNPLIVF), 285 to 305 (ISIPLGATINMAGAAVTISVL), 327 to 347 (VLSAIAAAGASGVAGGSLLLI), and 353 to 373 (LFGIPNDIAMQVVGVGFIIGV).

The protein belongs to the dicarboxylate/amino acid:cation symporter (DAACS) (TC 2.A.23) family.

It localises to the cell membrane. The catalysed reaction is L-serine(in) + Na(+)(in) = L-serine(out) + Na(+)(out). The enzyme catalyses L-threonine(in) + Na(+)(in) = L-threonine(out) + Na(+)(out). Its function is as follows. Involved in the import of serine and threonine into the cell, with the concomitant import of sodium (symport system). The protein is Serine/threonine transporter SstT of Geobacillus thermodenitrificans (strain NG80-2).